A 197-amino-acid chain; its full sequence is Phosphoheptose isomerase (197 aa).

The region spanning 36-197 (MVQCLVSEGK…IDQQLFGSTE (162 aa)) is the SIS domain. 51–53 (NGG) contacts substrate. Positions 60 and 64 each coordinate Zn(2+). Residues glutamate 64, 93 to 94 (ND), 119 to 121 (STS), serine 124, and glutamine 174 contribute to the substrate site. Residues glutamine 174 and histidine 182 each contribute to the Zn(2+) site.

It belongs to the SIS family. GmhA subfamily. Homotetramer. Zn(2+) is required as a cofactor.

Its subcellular location is the cytoplasm. It catalyses the reaction 2 D-sedoheptulose 7-phosphate = D-glycero-alpha-D-manno-heptose 7-phosphate + D-glycero-beta-D-manno-heptose 7-phosphate. The protein operates within carbohydrate biosynthesis; D-glycero-D-manno-heptose 7-phosphate biosynthesis; D-glycero-alpha-D-manno-heptose 7-phosphate and D-glycero-beta-D-manno-heptose 7-phosphate from sedoheptulose 7-phosphate: step 1/1. Its function is as follows. Catalyzes the isomerization of sedoheptulose 7-phosphate in D-glycero-D-manno-heptose 7-phosphate. The protein is Phosphoheptose isomerase of Chromohalobacter salexigens (strain ATCC BAA-138 / DSM 3043 / CIP 106854 / NCIMB 13768 / 1H11).